A 157-amino-acid chain; its full sequence is Probable succinate transporter subunit YjjB (157 aa).

4 helical membrane-spanning segments follow: residues Leu8–Phe28, Met50–Val70, Val87–Ile107, and Phe129–Trp149.

The protein belongs to the ThrE exporter (TC 2.A.79) family. The transporter is composed of YjjB and YjjP.

Its subcellular location is the cell inner membrane. Involved in succinate export with YjjP. Both proteins are required for export. The sequence is that of Probable succinate transporter subunit YjjB from Escherichia coli O127:H6 (strain E2348/69 / EPEC).